Here is an 802-residue protein sequence, read N- to C-terminus: Ras GTPase-activating protein 4 (802 aa).

C2 domains lie at 1-105 and 116-232; these read MAKR…SGWT and VQGE…EGWF. The Ca(2+) site is built by D21, D27, D74, D76, S79, D82, D149, D155, D202, D204, S207, and D210. Residues 317-545 enclose the Ras-GAP domain; it reads GLAKDFLDLL…AQLKDFIMKL (229 aa). One can recognise a PH domain in the interval 565–672; it reads PPVKEGPLFI…WLSALRKAST (108 aa). A Btk-type zinc finger spans residues 674–710; sequence NRGLLRSYHPGIFRGDKWSCCHQKDKTDQGCDKTHSR. Positions 682, 693, 694, and 704 each coordinate Zn(2+).

The cofactor is Ca(2+). Isoform 2 is expressed in osteoblasts.

It localises to the cytoplasm. It is found in the cytosol. The protein resides in the cell membrane. In terms of biological role, ca(2+)-dependent Ras GTPase-activating protein, that switches off the Ras-MAPK pathway following a stimulus that elevates intracellular calcium. Functions as an adaptor for Cdc42 and Rac1 during FcR-mediated phagocytosis. Isoform 2 activates the Ras pathway and promotes RANKL shedding by modulating the expression of MMP14. This is Ras GTPase-activating protein 4 (Rasa4) from Mus musculus (Mouse).